A 442-amino-acid chain; its full sequence is Galactose/N-acetylgalactosamine-binding lectin CEL-III (442 aa).

A propeptide spans 1–10 (MVSLVPCGFA) (removed in mature form). At Q11 the chain carries Pyrrolidone carboxylic acid. The interval 11–304 (QVLCTNPLDI…DWEVPTATWN (294 aa)) is has hemagglutinating activity towards rabbit erythrocytes, but no hemolytic activity towards them. Cystine bridges form between C14–C59, C31–C48, and C72–C88. Residues D19 and 33-36 (DIVG) each bind D-galactose. Ricin B-type lectin domains are found at residues 28–102 (SKQC…RWRL) and 115–245 (EQVA…WSRP). Ca(2+) contacts are provided by D33, I34, and G36. Mg(2+)-binding residues include N42 and I43. Residue D49 participates in D-galactose binding. D53 is a binding site for Ca(2+). Mg(2+) contacts are provided by N82 and V83. Residues V117 and 131–134 (DVEG) contribute to the D-galactose site. Cysteines 129 and 146 form a disulfide. 3 residues coordinate Ca(2+): D131, V132, and G134. Residue I141 participates in Mg(2+) binding. D-galactose is bound at residue 144-147 (YDCQ). Positions 151, 178, 179, and 181 each coordinate Ca(2+). Cysteines 176 and 193 form a disulfide. Residue 178 to 181 (DVEG) participates in D-galactose binding. Mg(2+) is bound by residues N187 and V188. 191–194 (YSCE) is a binding site for D-galactose. Ca(2+) contacts are provided by D198, D219, V220, and G222. C217 and C234 form a disulfide bridge. 219-222 (DVEG) is a binding site for D-galactose. Residues N228 and V229 each contribute to the Mg(2+) site. 232–235 (YRCD) is a D-galactose binding site. Ca(2+) is bound at residue D239. 2 disulfide bridges follow: C249–C254 and C264–C281. Residues 261–293 (SNKCLDVSGDQGTGDVGTWQCDGLPDQRFKWVF) form the Ricin B-type lectin 3 domain. Ca(2+) is bound by residues D266, V267, and G269. 266 to 269 (DVSG) provides a ligand contact to D-galactose. Residues D275 and V276 each coordinate Mg(2+). Residues 279–282 (WQCD) and D286 contribute to the D-galactose site. Residue D286 coordinates Ca(2+). Residues 294 to 442 (DDWEVPTATW…NEDCTFCTDI (149 aa)) form a has a strong tendency to self-associate leading to formation of oligomers region. 4 disulfide bridges follow: C308–C390, C377–C416, C425–C439, and C431–C436.

In terms of assembly, oligomerizes in the human and rabbit erythrocyte membranes. Oligomerization is induced by binding of beta-1,4-linked disaccharide ligands such as lactose, lactulose, N-acetyllactosamine and phenyl-beta-D-galactoside, but only a little by N-acetylgalactosamine and galactose, and not at all by melibiose in aqueous solution in the presence of high salt concentration and pH 10. Forms heptamers that assemble into larger 21mer oligomers, which may be inserted as a transmembrane pore to the erythrocyte membrane. Ca(2+) serves as cofactor. It depends on Mg(2+) as a cofactor. As to expression, expressed in body fluid (at protein level).

It localises to the secreted. Ca(2+) is required for hemolytic activity and the activity increases with increasing calcium concentration. Hemolytic activity is inhibited by N-acetylgalactosamine (GalNAc), lactose, lactulose, galactosamine, dextran with molecular masses greater than 4 kDa, to a lesser extent by inulin and only slightly by sucrose and melezitose, but not by glucose or mannose. The activity is abolished in the presence of 10 mM EDTA. Lactose-binding increases with increasing calcium concentration, but calcium has no effect on hemagglutinating activity. Cytotoxic effect on Madin-Darby canine kidney (MDCK) cell line is strongly inhibited by galactose, lactose and N-acetylgalactosamine (GalNAc), but not by raffinose, N-acetylglucosamine (GlcNAc), glucose, mannose, ribose or sucrose. Pore formation in artificial lactosyl ceramide (LacCer) or globotetraosylceramide (Gb4Cer) containing liposomes is strongly inhibited by lactose. In terms of biological role, galactose/N-acetylgalactosamine (Gal/GalNAc)-binding lectin with hemolytic activity. Favors saccharides that have a beta-1,4 linkage at the non-reducing end rather than saccharides having alpha-1,6 or alpha-1,4 linkages. Binds lactose, lactulose, GalNAc, galactosamine, methyl alpha-galactopyranoside, methyl beta-galactopyranoside, N-acetyllactosamine, p-nitrophenyl beta-D-galactopyranoside (pNP-Gal), p-nitrophenyl N-acetyl-beta-D-galactosaminide (pNP-GalNAc), asialofetuin, and human erythrocyte membrane lipids lactosyl ceramide (LacCer) and globoside globotetraosylceramide (Gb4Cer). Binds moderately to galactose, melibiose, raffinose, fucose, methyl alpha-galactoside and methyl beta-galactoside. Binds weakly to glucose, mannose and N-acetylglucosamine (GlcNAc). Has hemolytic activity towards human (A, B and O-type), rabbit and rat erythrocytes, but not towards mouse, chicken or horse erythrocytes. Forms ion-permeable transmembrane pores in the erythrocyte membrane as well as in artificial liposomes containing human erythrocyte membrane lipids LacCer, Gb4Cer and galactosyl ceramide (GalCer) leading to destruction of the membrane. Has hemagglutinating activity towards rabbit, human and rat erythrocytes, and at relatively high concentrations towards chicken and horse erythrocytes, but not towards mouse erythrocytes. Has dose-dependent cytotoxic effect on Madin-Darby canine kidney (MDCK), African green monkey kidney (Vero) and human epithelia carcinoma (HeLa) cell lines, but Chinese hamster ovary (CHO), rat sarcoma (XC) and potoroo rat kangaroo kidney (PtK1) cells are highly resistant to the cytotoxic effect of this protein. Impairs malaria parasite development in malaria parasite infected transgenic A.stephensi mosquitoes expressing this protein specifically in their midguts. Binds to ookinetes and leads to strong dose-dependent inhibition of ookinete formation in vitro. Leads to severely impaired oocyst formation and significantly reduced sporozoite production of rodent malaria parasite P.berghei in the salivary glands of the transgenic mosquitoes. The parasite transmission to uninfected mice (vectorial competence) of these mosquitoes is significantly impaired. Also leads to severely impaired oocyst formation of human malaria parasite P.falciparum in transgenic mosquitoes fed on mature P.falciparum gametocyte cultures. May be involved in defense mechanisms acting as a toxic protein to foreign microorganisms. May act in defense against predators. The sequence is that of Galactose/N-acetylgalactosamine-binding lectin CEL-III from Pseudocnus echinatus (Sea cucumber).